We begin with the raw amino-acid sequence, 279 residues long: tRNA dimethylallyltransferase (279 aa).

10-17 (GPTASGKS) provides a ligand contact to ATP. 12 to 17 (TASGKS) is a substrate binding site.

The protein belongs to the IPP transferase family. In terms of assembly, monomer. It depends on Mg(2+) as a cofactor.

It carries out the reaction adenosine(37) in tRNA + dimethylallyl diphosphate = N(6)-dimethylallyladenosine(37) in tRNA + diphosphate. Functionally, catalyzes the transfer of a dimethylallyl group onto the adenine at position 37 in tRNAs that read codons beginning with uridine, leading to the formation of N6-(dimethylallyl)adenosine (i(6)A). The polypeptide is tRNA dimethylallyltransferase (Roseobacter denitrificans (strain ATCC 33942 / OCh 114) (Erythrobacter sp. (strain OCh 114))).